We begin with the raw amino-acid sequence, 207 residues long: N-(5'-phosphoribosyl)anthranilate isomerase (207 aa).

Belongs to the TrpF family.

The enzyme catalyses N-(5-phospho-beta-D-ribosyl)anthranilate = 1-(2-carboxyphenylamino)-1-deoxy-D-ribulose 5-phosphate. Its pathway is amino-acid biosynthesis; L-tryptophan biosynthesis; L-tryptophan from chorismate: step 3/5. This is N-(5'-phosphoribosyl)anthranilate isomerase from Legionella pneumophila (strain Lens).